The primary structure comprises 262 residues: Phosphatidylserine decarboxylase proenzyme (262 aa).

Residues aspartate 86, histidine 142, and serine 226 each act as charge relay system; for autoendoproteolytic cleavage activity in the active site. Catalysis depends on serine 226, which acts as the Schiff-base intermediate with substrate; via pyruvic acid; for decarboxylase activity. Serine 226 carries the post-translational modification Pyruvic acid (Ser); by autocatalysis.

The protein belongs to the phosphatidylserine decarboxylase family. PSD-B subfamily. Prokaryotic type I sub-subfamily. Heterodimer of a large membrane-associated beta subunit and a small pyruvoyl-containing alpha subunit. The cofactor is pyruvate. Is synthesized initially as an inactive proenzyme. Formation of the active enzyme involves a self-maturation process in which the active site pyruvoyl group is generated from an internal serine residue via an autocatalytic post-translational modification. Two non-identical subunits are generated from the proenzyme in this reaction, and the pyruvate is formed at the N-terminus of the alpha chain, which is derived from the carboxyl end of the proenzyme. The autoendoproteolytic cleavage occurs by a canonical serine protease mechanism, in which the side chain hydroxyl group of the serine supplies its oxygen atom to form the C-terminus of the beta chain, while the remainder of the serine residue undergoes an oxidative deamination to produce ammonia and the pyruvoyl prosthetic group on the alpha chain. During this reaction, the Ser that is part of the protease active site of the proenzyme becomes the pyruvoyl prosthetic group, which constitutes an essential element of the active site of the mature decarboxylase.

Its subcellular location is the cell membrane. It catalyses the reaction a 1,2-diacyl-sn-glycero-3-phospho-L-serine + H(+) = a 1,2-diacyl-sn-glycero-3-phosphoethanolamine + CO2. It participates in phospholipid metabolism; phosphatidylethanolamine biosynthesis; phosphatidylethanolamine from CDP-diacylglycerol: step 2/2. Catalyzes the formation of phosphatidylethanolamine (PtdEtn) from phosphatidylserine (PtdSer). The protein is Phosphatidylserine decarboxylase proenzyme of Bacillus cereus (strain ATCC 10987 / NRS 248).